We begin with the raw amino-acid sequence, 125 residues long: Small ribosomal subunit protein uS13 (125 aa).

Residues 93–125 (RSLPVRGQRTRTNARTRKGKRKTVAGKKKAGKK) are disordered.

This sequence belongs to the universal ribosomal protein uS13 family. As to quaternary structure, part of the 30S ribosomal subunit. Forms a loose heterodimer with protein S19. Forms two bridges to the 50S subunit in the 70S ribosome.

Located at the top of the head of the 30S subunit, it contacts several helices of the 16S rRNA. In the 70S ribosome it contacts the 23S rRNA (bridge B1a) and protein L5 of the 50S subunit (bridge B1b), connecting the 2 subunits; these bridges are implicated in subunit movement. Contacts the tRNAs in the A and P-sites. The protein is Small ribosomal subunit protein uS13 of Chlorobaculum tepidum (strain ATCC 49652 / DSM 12025 / NBRC 103806 / TLS) (Chlorobium tepidum).